The chain runs to 79 residues: uncharacterized protein (79 aa).

It belongs to the asfivirus D79L family.

This is an uncharacterized protein from African swine fever virus (isolate Tick/South Africa/Pretoriuskop Pr4/1996) (ASFV).